We begin with the raw amino-acid sequence, 383 residues long: Succinyl-diaminopimelate desuccinylase (383 aa).

His-73 contacts Zn(2+). Asp-75 is an active-site residue. Position 107 (Asp-107) interacts with Zn(2+). The active-site Proton acceptor is Glu-141. 3 residues coordinate Zn(2+): Glu-142, Glu-170, and His-356.

Belongs to the peptidase M20A family. DapE subfamily. As to quaternary structure, homodimer. It depends on Zn(2+) as a cofactor. Co(2+) serves as cofactor.

The enzyme catalyses N-succinyl-(2S,6S)-2,6-diaminopimelate + H2O = (2S,6S)-2,6-diaminopimelate + succinate. Its pathway is amino-acid biosynthesis; L-lysine biosynthesis via DAP pathway; LL-2,6-diaminopimelate from (S)-tetrahydrodipicolinate (succinylase route): step 3/3. Catalyzes the hydrolysis of N-succinyl-L,L-diaminopimelic acid (SDAP), forming succinate and LL-2,6-diaminopimelate (DAP), an intermediate involved in the bacterial biosynthesis of lysine and meso-diaminopimelic acid, an essential component of bacterial cell walls. The polypeptide is Succinyl-diaminopimelate desuccinylase (Pseudomonas fluorescens (strain ATCC BAA-477 / NRRL B-23932 / Pf-5)).